The primary structure comprises 480 residues: Carboxy-terminal processing protease CtpB (480 aa).

An N-terminal signal peptide occupies residues 1-23 (MNQKIMAVIAAGSMLFGGAGVYA). The PDZ domain occupies 92–182 (SVYMDKQTAK…SSVSMKIQRP (91 aa)). The segment at 113-116 (GIGA) is peptide binding. Catalysis depends on serine 309, which acts as the Nucleophile. Catalysis depends on charge relay system residues lysine 334 and glutamine 338.

Belongs to the peptidase S41A family. In terms of assembly, homodimer. In terms of processing, is cleaved by SpoIVB in vitro and in vivo but this cleavage does not appear to be necessary for CtpB activation. CtpB can also cleave itself in vivo.

The protein resides in the forespore intermembrane space. The enzyme catalyses The enzyme shows specific recognition of a C-terminal tripeptide, Xaa-Yaa-Zaa, in which Xaa is preferably Ala or Leu, Yaa is preferably Ala or Tyr, and Zaa is preferably Ala, but then cleaves at a variable distance from the C-terminus. A typical cleavage is -Ala-Ala-|-Arg-Ala-Ala-Lys-Glu-Asn-Tyr-Ala-Leu-Ala-Ala.. Activated by peptide binding to the PDZ domain. Involved in the signal transduction pathway leading to the proteolytic activation of the mother cell transcription factor pro-sigma-K during sporulation. The signaling serine protease CtpB triggers pro-sigma-K processing by cleaving the pre-processed regulatory protein SpoIVFA and is necessary for the proper timing of sigma-K activation. The protein is Carboxy-terminal processing protease CtpB (ctpB) of Bacillus subtilis (strain 168).